The following is a 162-amino-acid chain: Xanthine phosphoribosyltransferase (162 aa).

Residues Leu-5 and Thr-12 each contribute to the xanthine site. Residue 113 to 117 participates in 5-phospho-alpha-D-ribose 1-diphosphate binding; that stretch reads ANGQA. Lys-141 lines the xanthine pocket.

It belongs to the purine/pyrimidine phosphoribosyltransferase family. Xpt subfamily. In terms of assembly, homodimer.

It localises to the cytoplasm. The enzyme catalyses XMP + diphosphate = xanthine + 5-phospho-alpha-D-ribose 1-diphosphate. The protein operates within purine metabolism; XMP biosynthesis via salvage pathway; XMP from xanthine: step 1/1. Converts the preformed base xanthine, a product of nucleic acid breakdown, to xanthosine 5'-monophosphate (XMP), so it can be reused for RNA or DNA synthesis. The protein is Xanthine phosphoribosyltransferase (xpt) of Streptococcus mitis.